The chain runs to 154 residues: Flagellar assembly factor FliW (154 aa).

Belongs to the FliW family. As to quaternary structure, interacts with translational regulator CsrA and flagellin(s).

Its subcellular location is the cytoplasm. Acts as an anti-CsrA protein, binds CsrA and prevents it from repressing translation of its target genes, one of which is flagellin. Binds to flagellin and participates in the assembly of the flagellum. The chain is Flagellar assembly factor FliW from Carboxydothermus hydrogenoformans (strain ATCC BAA-161 / DSM 6008 / Z-2901).